The primary structure comprises 518 residues: Ethanolamine kinase (518 aa).

Residues 1-19 (MGTETKSNSYTGQISTSGG) are compositionally biased toward polar residues. The interval 1–88 (MGTETKSNSY…DIRAKPEDKS (88 aa)) is disordered. Low complexity predominate over residues 33–68 (QTVNQQTLSLSQSNQVQNQLNSHSNSNSYPNPSGSE). Basic and acidic residues predominate over residues 69 to 88 (NKNENEQNSRDIRAKPEDKS). S190 and S194 each carry phosphoserine.

Belongs to the choline/ethanolamine kinase family.

The protein resides in the cytoplasm. The catalysed reaction is ethanolamine + ATP = phosphoethanolamine + ADP + H(+). It participates in phospholipid metabolism; phosphatidylethanolamine biosynthesis; phosphatidylethanolamine from ethanolamine: step 1/3. Functionally, highly specific for ethanolamine phosphorylation. May be a rate-controlling step in phosphatidylethanolamine biosynthesis. In Drosophila melanogaster (Fruit fly), this protein is Ethanolamine kinase (eas).